The primary structure comprises 301 residues: Syntaxin-17 (301 aa).

N-acetylserine is present on Ser2. The Cytoplasmic segment spans residues 2 to 227; sequence SEDEEKVKLR…KNLQKAAKYK (226 aa). Position 41 is an N6-acetyllysine (Lys41). A coiled-coil region spans residues 49–128; the sequence is DKLHEEHINA…QVKNEEALLQ (80 aa). Tyr156 carries the phosphotyrosine; by ABL1 modification. One can recognise a t-SNARE coiled-coil homology domain in the interval 161 to 223; that stretch reads IPRDQNAAES…EEGTKNLQKA (63 aa). The chain crosses the membrane as a helical span at residues 228-248; the sequence is LAALPVAGAVIGGVVGGPIGL. The tract at residues 228–274 is necessary and sufficient for localization to autophagosome; sequence LAALPVAGAVIGGVVGGPIGLLAGFKVAGIAAALGGGVLGFTGGKLI. Topologically, residues 249-253 are lumenal; it reads LAGFK. Residues 254–274 form a helical membrane-spanning segment; it reads VAGIAAALGGGVLGFTGGKLI. The segment at 273–301 is required for interaction with COPB1, TMED9 and TMED10; sequence LIQRRKQKMMEKLTSSCPDLPSQSDKKCS. Residues 275 to 301 lie on the Cytoplasmic side of the membrane; that stretch reads QRRKQKMMEKLTSSCPDLPSQSDKKCS. At Ser288 the chain carries Phosphoserine. The Endoplasmic reticulum retention signal signature appears at 298 to 301; that stretch reads KKCS.

Belongs to the syntaxin family. In terms of assembly, forms a SNARE complex composed of VAMP8, SNAP29 and STX17 involved in fusion of autophagosome with lysosome. May interact with VAMP7. May interact with VTI1B. Probably interacts with BET1, SCFD1 and SEC22B. Interacts with PTPN2 and ABL1; involved in STX17 phosphorylation. Interacts with COPB1. Interacts with TMED9 and TMED10; the interaction is direct. Interacts with RUBCNL/PACER; promoting targeting of RUBCNL/PACER to autophagosome. Interacts with VAMP8, SNAP29, VPS39 and VPS41; these interactions are increased in the absence of TMEM39A. Interacts with IRGM; promoting STX17 recruitment to autophagosomes. Interacts with ATG8 proteins GABARAP and MAP1LC3B. Interacts with RNF115; this interaction enhances STX17 stability which in turn promotes autophagosome maturation. Interacts with RAB39A (GTP-bound); the interaction promotes autophagosome-lysosome membrane fusion driven by STX17-SNAP29-VAMP8. Interacts with RAB39B; the interaction may promote a different fonction in autophagy as compared with RAB39A. Post-translationally, phosphorylated at Tyr-156 probably by ABL1. Dephosphorylation by PTPN2; regulates exit from the endoplasmic reticulum. As to expression, detected in all tissues examined with higher expression in steroidogenic tissues including testis and adrenal gland (at protein level). Highly expressed in liver and testis. Also found in brain, heart, kidney, lung, placenta, skeletal muscle and spleen.

The protein resides in the endoplasmic reticulum membrane. Its subcellular location is the smooth endoplasmic reticulum membrane. It localises to the endoplasmic reticulum-Golgi intermediate compartment membrane. The protein localises to the cytoplasmic vesicle. It is found in the autophagosome membrane. The protein resides in the COPII-coated vesicle membrane. Its subcellular location is the cytoplasm. It localises to the cytosol. The protein localises to the mitochondrion membrane. It is found in the autolysosome membrane. In terms of biological role, SNAREs, soluble N-ethylmaleimide-sensitive factor-attachment protein receptors, are essential proteins for fusion of cellular membranes. SNAREs localized on opposing membranes assemble to form a trans-SNARE complex, an extended, parallel four alpha-helical bundle that drives membrane fusion. STX17 is a SNARE of the autophagosome involved in autophagy through the direct control of autophagosome membrane fusion with the lysosome membrane. May also play a role in the early secretory pathway where it may maintain the architecture of the endoplasmic reticulum-Golgi intermediate compartment/ERGIC and Golgi and/or regulate transport between the endoplasmic reticulum, the ERGIC and the Golgi. The chain is Syntaxin-17 from Rattus norvegicus (Rat).